A 417-amino-acid chain; its full sequence is Serine hydroxymethyltransferase (417 aa).

Residues leucine 121 and 125-127 (GHL) each bind (6S)-5,6,7,8-tetrahydrofolate. At lysine 230 the chain carries N6-(pyridoxal phosphate)lysine. 355 to 357 (SPF) serves as a coordination point for (6S)-5,6,7,8-tetrahydrofolate.

This sequence belongs to the SHMT family. Homodimer. Requires pyridoxal 5'-phosphate as cofactor.

The protein localises to the cytoplasm. The catalysed reaction is (6R)-5,10-methylene-5,6,7,8-tetrahydrofolate + glycine + H2O = (6S)-5,6,7,8-tetrahydrofolate + L-serine. The protein operates within one-carbon metabolism; tetrahydrofolate interconversion. Its pathway is amino-acid biosynthesis; glycine biosynthesis; glycine from L-serine: step 1/1. Its function is as follows. Catalyzes the reversible interconversion of serine and glycine with tetrahydrofolate (THF) serving as the one-carbon carrier. This reaction serves as the major source of one-carbon groups required for the biosynthesis of purines, thymidylate, methionine, and other important biomolecules. Also exhibits THF-independent aldolase activity toward beta-hydroxyamino acids, producing glycine and aldehydes, via a retro-aldol mechanism. This is Serine hydroxymethyltransferase from Marinobacter nauticus (strain ATCC 700491 / DSM 11845 / VT8) (Marinobacter aquaeolei).